The chain runs to 242 residues: Uridylate kinase (242 aa).

Residue Lys-16–Gly-19 coordinates ATP. Positions Gly-24–Gly-29 are involved in allosteric activation by GTP. Gly-58 is a binding site for UMP. Positions 59 and 63 each coordinate ATP. Residues Asp-78 and Thr-139–Thr-146 each bind UMP. Thr-166, Tyr-172, and Asp-175 together coordinate ATP.

The protein belongs to the UMP kinase family. In terms of assembly, homohexamer.

It is found in the cytoplasm. The catalysed reaction is UMP + ATP = UDP + ADP. Its pathway is pyrimidine metabolism; CTP biosynthesis via de novo pathway; UDP from UMP (UMPK route): step 1/1. Its activity is regulated as follows. Allosterically activated by GTP. Inhibited by UTP. In terms of biological role, catalyzes the reversible phosphorylation of UMP to UDP. The polypeptide is Uridylate kinase (Roseobacter denitrificans (strain ATCC 33942 / OCh 114) (Erythrobacter sp. (strain OCh 114))).